A 225-amino-acid polypeptide reads, in one-letter code: Glutathione S-transferase Mu 3 (225 aa).

Residues 5 to 92 (SSMVLGYWDI…YIARKHNMCG (88 aa)) form the GST N-terminal domain. Glutathione-binding positions include 11-12 (YW), 50-54 (WLDVK), and 63-64 (NL). Lysine 54 is covalently cross-linked (Glycyl lysine isopeptide (Lys-Gly) (interchain with G-Cter in SUMO2)). Lysine 73 participates in a covalent cross-link: Glycyl lysine isopeptide (Lys-Gly) (interchain with G-Cter in SUMO2). 76–77 (QS) serves as a coordination point for glutathione. A GST C-terminal domain is found at 94–212 (TEEEKIRVDI…QSDQFFKMPI (119 aa)). Tyrosine 120 is a binding site for substrate.

The protein belongs to the GST superfamily. Mu family. In terms of assembly, homodimer.

The protein localises to the cytoplasm. It carries out the reaction RX + glutathione = an S-substituted glutathione + a halide anion + H(+). Its function is as follows. Conjugation of reduced glutathione to a wide number of exogenous and endogenous hydrophobic electrophiles. May govern uptake and detoxification of both endogenous compounds and xenobiotics at the testis and brain blood barriers. The polypeptide is Glutathione S-transferase Mu 3 (GSTM3) (Macaca fuscata fuscata (Japanese macaque)).